Consider the following 319-residue polypeptide: Thioredoxin reductase (319 aa).

Residues 11 to 14 (SGPA), 40 to 41 (IA), Q45, N54, V87, C145, D288, and 295 to 297 (RQA) contribute to the FAD site. A disulfide bridge links C142 with C145.

This sequence belongs to the class-II pyridine nucleotide-disulfide oxidoreductase family. As to quaternary structure, homodimer. FAD serves as cofactor.

It localises to the cytoplasm. The catalysed reaction is [thioredoxin]-dithiol + NADP(+) = [thioredoxin]-disulfide + NADPH + H(+). The polypeptide is Thioredoxin reductase (TRR1) (Yarrowia lipolytica (strain CLIB 122 / E 150) (Yeast)).